A 70-amino-acid polypeptide reads, in one-letter code: Large ribosomal subunit protein bL31 (70 aa).

Zn(2+) is bound by residues cysteine 16, cysteine 18, cysteine 37, and cysteine 40.

This sequence belongs to the bacterial ribosomal protein bL31 family. Type A subfamily. As to quaternary structure, part of the 50S ribosomal subunit. It depends on Zn(2+) as a cofactor.

In terms of biological role, binds the 23S rRNA. The sequence is that of Large ribosomal subunit protein bL31 from Shewanella halifaxensis (strain HAW-EB4).